A 386-amino-acid polypeptide reads, in one-letter code: Benzoyl-CoA reductase subunit C (386 aa).

This sequence belongs to the FldB/FldC dehydratase alpha/beta subunit family. In terms of assembly, heterotetramer composed of A, B, C, and D subunits. The cofactor is iron-sulfur cluster. An oxidized flavin serves as cofactor.

It carries out the reaction cyclohexa-1,5-diene-1-carbonyl-CoA + oxidized 2[4Fe-4S]-[ferredoxin] + 2 ADP + 2 phosphate = reduced 2[4Fe-4S]-[ferredoxin] + benzoyl-CoA + 2 ATP + 2 H2O. It catalyses the reaction 3-hydroxybenzoyl-CoA + AH2 + 2 ATP + 2 H2O = 3-hydroxycyclohexa-1,5-diene-1-carbonyl-CoA + A + 2 ADP + 2 phosphate + 2 H(+). Functionally, catalyzes the anaerobic reduction of benzoyl-CoA and 3-hydroxybenzoyl-CoA to form cyclohexa-1,5-diene-1-carbonyl-CoA and 3-hydroxycyclohexa-1,5-diene-1-carbonyl-CoA, respectively. The enzyme also reduces other benzoyl-CoA analogs with small substituents at the aromatic ring. This chain is Benzoyl-CoA reductase subunit C (bcrC), found in Thauera aromatica.